A 139-amino-acid chain; its full sequence is Hydrogenase maturation factor HypA (139 aa).

A Ni(2+)-binding site is contributed by histidine 2. 4 residues coordinate Zn(2+): cysteine 75, cysteine 78, cysteine 111, and cysteine 114.

This sequence belongs to the HypA/HybF family.

Functionally, involved in the maturation of [NiFe] hydrogenases. Required for nickel insertion into the metal center of the hydrogenase. The polypeptide is Hydrogenase maturation factor HypA (Ignicoccus hospitalis (strain KIN4/I / DSM 18386 / JCM 14125)).